Here is a 298-residue protein sequence, read N- to C-terminus: Junctional adhesion molecule B (298 aa).

The signal sequence occupies residues 1-28 (MARRSRHRLLLLLLRYLVVALGYHKAYG). Residues 29-238 (FSAPKDQQVV…RMQVDDLNIS (210 aa)) lie on the Extracellular side of the membrane. Positions 32 to 127 (PKDQQVVTAV…GQNLEEDTVT (96 aa)) constitute an Ig-like V-type domain. 2 cysteine pairs are disulfide-bonded: Cys50–Cys109 and Cys155–Cys214. Residues Asn98, Asn187, and Asn236 are each glycosylated (N-linked (GlcNAc...) asparagine). The 105-residue stretch at 134 to 238 (PAVPSCEVPS…RMQVDDLNIS (105 aa)) folds into the Ig-like C2-type domain. The helical transmembrane segment at 239–259 (GIIAAVVVVALVISVCGLGVC) threads the bilayer. The Cytoplasmic portion of the chain corresponds to 260 to 298 (YAQRKGYFSKETSFQKSNSSSKATTMSENDFKHTKSFII).

Belongs to the immunoglobulin superfamily. As to expression, highly expressed in heart, placenta, lung, foreskin and lymph node. Prominently expressed on high endothelial venules and also present on the endothelia of other vessels (at protein level). Also expressed in the brain in the caudate nuclei.

It localises to the cell membrane. The protein resides in the cell junction. It is found in the tight junction. Functionally, junctional adhesion protein that mediates heterotypic cell-cell interactions with its cognate receptor JAM3 to regulate different cellular processes. Plays a role in homing and mobilization of hematopoietic stem and progenitor cells within the bone marrow. At the surface of bone marrow stromal cells, it contributes to the retention of the hematopoietic stem and progenitor cells expressing JAM3. Plays a central role in leukocytes extravasation by facilitating not only transmigration but also tethering and rolling of leukocytes along the endothelium. Tethering and rolling of leukocytes are dependent on the binding by JAM2 of the integrin alpha-4/beta-1. Plays a role in spermatogenesis where JAM2 and JAM3, which are respectively expressed by Sertoli and germ cells, mediate an interaction between both cell types and play an essential role in the anchorage of germ cells onto Sertoli cells and the assembly of cell polarity complexes during spermatid differentiation. Also functions as an inhibitory somatodendritic cue that prevents the myelination of non-axonal parts of neurons. During myogenesis, it is involved in myocyte fusion. May also play a role in angiogenesis. The polypeptide is Junctional adhesion molecule B (Homo sapiens (Human)).